The sequence spans 270 residues: Formamidopyrimidine-DNA glycosylase (270 aa).

Proline 2 (schiff-base intermediate with DNA) is an active-site residue. Catalysis depends on glutamate 3, which acts as the Proton donor. Lysine 58 functions as the Proton donor; for beta-elimination activity in the catalytic mechanism. Residues histidine 91, arginine 110, and lysine 151 each coordinate DNA. The FPG-type zinc-finger motif lies at 236-270; it reads FVYGRGGEACKVCGTELRNVVLGQRASVFCPRCQR. Arginine 260 serves as the catalytic Proton donor; for delta-elimination activity.

It belongs to the FPG family. Monomer. Zn(2+) is required as a cofactor.

The catalysed reaction is Hydrolysis of DNA containing ring-opened 7-methylguanine residues, releasing 2,6-diamino-4-hydroxy-5-(N-methyl)formamidopyrimidine.. The enzyme catalyses 2'-deoxyribonucleotide-(2'-deoxyribose 5'-phosphate)-2'-deoxyribonucleotide-DNA = a 3'-end 2'-deoxyribonucleotide-(2,3-dehydro-2,3-deoxyribose 5'-phosphate)-DNA + a 5'-end 5'-phospho-2'-deoxyribonucleoside-DNA + H(+). In terms of biological role, involved in base excision repair of DNA damaged by oxidation or by mutagenic agents. Acts as a DNA glycosylase that recognizes and removes damaged bases. Has a preference for oxidized purines, such as 7,8-dihydro-8-oxoguanine (8-oxoG). Has AP (apurinic/apyrimidinic) lyase activity and introduces nicks in the DNA strand. Cleaves the DNA backbone by beta-delta elimination to generate a single-strand break at the site of the removed base with both 3'- and 5'-phosphates. This chain is Formamidopyrimidine-DNA glycosylase, found in Pseudomonas fluorescens (strain SBW25).